The chain runs to 716 residues: MARLSTGKAACQVVLGLLITSLTESSILTSECPQLCVCEIRPWFTPQSTYREATTVDCNDLRLTRIPGNLSSDTQVLLLQSNNIAKTVDELQQLFNLTELDFSQNNFTNIKEVGLANLTQLTTLHLEENQISEMTDYCLQDLSNLQELYINHNQISTISANAFSGLKNLLRLHLNSNKLKVIDSRWFDSTPNLEILMIGENPVIGILDMNFRPLSNLRSLVLAGMYLTDVPGNALVGLDSLESLSFYDNKLIKVPQLALQKVPNLKFLDLNKNPIHKIQEGDFKNMLRLKELGINNMGELVSVDRYALDNLPELTKLEATNNPKLSYIHRLAFRSVPALESLMLNNNALNAVYQKTVESLPNLREISIHSNPLRCDCVIHWINSNKTNIRFMEPLSMFCAMPPEYRGQQVKEVLIQDSSEQCLPMISHDTFPNHLNMDIGTTLFLDCRAMAEPEPEIYWVTPIGNKITVETLSDKYKLSSEGTLEIANIQIEDSGRYTCVAQNVQGADTRVATIKVNGTLLDGAQVLKIYVKQTESHSILVSWKVNSNVMTSNLKWSSATMKIDNPHITYTARVPVDVHEYNLTHLQPSTDYEVCLTVSNIHQQTQKSCVNVTTKTAAFALDISDHETSTALAAVMGSMFAVISLASIAIYIAKRFKRKNYHHSLKKYMQKTSSIPLNELYPPLINLWEADSDKDKDGSADTKPTQVDTSRSYYMW.

A signal peptide spans 1 to 25 (MARLSTGKAACQVVLGLLITSLTES). One can recognise an LRRNT domain in the interval 26-72 (SILTSECPQLCVCEIRPWFTPQSTYREATTVDCNDLRLTRIPGNLSS). Topologically, residues 26-631 (SILTSECPQL…DISDHETSTA (606 aa)) are extracellular. N-linked (GlcNAc...) asparagine glycosylation occurs at N69. LRR repeat units follow at residues 73–95 (DTQV…QQLF), 96–117 (NLTE…GLAN), 120–141 (QLTT…CLQD), 144–165 (NLQE…AFSG), 168–189 (NLLR…WFDS), 192–213 (NLEI…NFRP), 216–237 (NLRS…ALVG), 240–261 (SLES…ALQK), and 264–285 (NLKF…DFKN). N96 and N117 each carry an N-linked (GlcNAc...) asparagine glycan. One can recognise an LRRCT domain in the interval 371–424 (NPLRCDCVIHWINSNKTNIRFMEPLSMFCAMPPEYRGQQVKEVLIQDSSEQCLP). A glycan (N-linked (GlcNAc...) asparagine) is linked at N385. In terms of domain architecture, Ig-like C2-type spans 424–515 (PMISHDTFPN…GADTRVATIK (92 aa)). Residues C447 and C499 are joined by a disulfide bond. N-linked (GlcNAc...) asparagine glycosylation occurs at N517. Positions 525-619 (QVLKIYVKQT…VNVTTKTAAF (95 aa)) constitute a Fibronectin type-III domain. Residues 632 to 652 (LAAVMGSMFAVISLASIAIYI) form a helical membrane-spanning segment. The Cytoplasmic segment spans residues 653-716 (AKRFKRKNYH…VDTSRSYYMW (64 aa)). Positions 692–716 (SDKDKDGSADTKPTQVDTSRSYYMW) are disordered. Polar residues predominate over residues 702–716 (TKPTQVDTSRSYYMW).

In terms of tissue distribution, expressed in brain.

Its subcellular location is the membrane. The protein is Leucine-rich repeat neuronal protein 1 (Lrrn1) of Mus musculus (Mouse).